Reading from the N-terminus, the 369-residue chain is Septin-5 (369 aa).

Threonine 13 carries the post-translational modification Phosphothreonine. The Septin-type G domain occupies 41–314 (KGFDFTLMVA…ENYRAHCIQQ (274 aa)). Positions 51–58 (GESGLGKS) are G1 motif. Residues 51-58 (GESGLGKS), threonine 85, and glycine 111 each bind GTP. Residues 108–111 (DTPG) are G3 motif. Omega-N-methylarginine is present on arginine 168. The interval 189–192 (AKAD) is G4 motif. 190 to 198 (KADCLVPSE) contacts GTP. Serine 225 is subject to Phosphoserine. GTP contacts are provided by glycine 248 and arginine 263. At serine 327 the chain carries Phosphoserine. Residue threonine 336 is modified to Phosphothreonine. Residues 338-369 (DSETEKLIRMKDEELRRMQEMLQKMKQRMQDQ) adopt a coiled-coil conformation.

This sequence belongs to the TRAFAC class TrmE-Era-EngA-EngB-Septin-like GTPase superfamily. Septin GTPase family. Septins polymerize into heterooligomeric protein complexes that form filaments, and can associate with cellular membranes, actin filaments and microtubules. GTPase activity is required for filament formation. Interacts with SEPTIN2 and SEPTIN5. In platelets, associated with a complex containing STX4. Interacts with PRKN; this interaction leads to SEPTIN5 ubiquitination and degradation. Interacts with DYRK1A. Interacts with STX1A; in the cerebellar cortex. In terms of processing, phosphorylated by DYRK1A. As to expression, expressed in brain and testis and at lower level in heart, spleen, lung and kidney.

It localises to the cytoplasm. The protein localises to the cytoskeleton. Filament-forming cytoskeletal GTPase. May play a role in cytokinesis (Potential). May play a role in platelet secretion. This chain is Septin-5, found in Rattus norvegicus (Rat).